A 344-amino-acid chain; its full sequence is Probable electron transfer flavoprotein subunit alpha, mitochondrial (344 aa).

Position 284-312 (284-312 (LYIAIGVSGAVQHLAGMKDSKVIVAINND)) interacts with FAD.

The protein belongs to the ETF alpha-subunit/FixB family. In terms of assembly, heterodimer of an alpha and a beta subunit. Requires FAD as cofactor.

It is found in the mitochondrion matrix. In terms of biological role, the electron transfer flavoprotein serves as a specific electron acceptor for several dehydrogenases, including five acyl-CoA dehydrogenases, glutaryl-CoA and sarcosine dehydrogenase. It transfers the electrons to the main mitochondrial respiratory chain via ETF-ubiquinone oxidoreductase (ETF dehydrogenase). This Saccharomyces cerevisiae (strain ATCC 204508 / S288c) (Baker's yeast) protein is Probable electron transfer flavoprotein subunit alpha, mitochondrial (AIM45).